The following is a 734-amino-acid chain: Photosystem I P700 chlorophyll a apoprotein A2 (734 aa).

Helical transmembrane passes span 46–69, 135–158, 175–199, 273–291, 330–353, 369–395, 417–439, and 517–535; these read IFAS…FHVA, LYTG…LHLQ, LNHH…HVAI, IAHH…GHMY, LHFQ…QHMY, AALY…IFFI, AIIS…LYVH, and FLVH…LILV. The [4Fe-4S] cluster site is built by cysteine 559 and cysteine 568. 2 helical membrane-spanning segments follow: residues 575–596 and 643–665; these read AFYL…YWHW and LSVW…MFLI. Residues histidine 654, methionine 662, and tyrosine 670 each coordinate chlorophyll a. Tryptophan 671 contacts phylloquinone. A helical transmembrane segment spans residues 707-727; the sequence is LVGLAHFSVGYIFTYAAFLIA.

It belongs to the PsaA/PsaB family. As to quaternary structure, the PsaA/B heterodimer binds the P700 chlorophyll special pair and subsequent electron acceptors. PSI consists of a core antenna complex that captures photons, and an electron transfer chain that converts photonic excitation into a charge separation. The eukaryotic PSI reaction center is composed of at least 11 subunits. The cofactor is P700 is a chlorophyll a/chlorophyll a' dimer, A0 is one or more chlorophyll a, A1 is one or both phylloquinones and FX is a shared 4Fe-4S iron-sulfur center..

Its subcellular location is the plastid. The protein localises to the chloroplast thylakoid membrane. It catalyses the reaction reduced [plastocyanin] + hnu + oxidized [2Fe-2S]-[ferredoxin] = oxidized [plastocyanin] + reduced [2Fe-2S]-[ferredoxin]. PsaA and PsaB bind P700, the primary electron donor of photosystem I (PSI), as well as the electron acceptors A0, A1 and FX. PSI is a plastocyanin-ferredoxin oxidoreductase, converting photonic excitation into a charge separation, which transfers an electron from the donor P700 chlorophyll pair to the spectroscopically characterized acceptors A0, A1, FX, FA and FB in turn. Oxidized P700 is reduced on the lumenal side of the thylakoid membrane by plastocyanin. In Solanum bulbocastanum (Wild potato), this protein is Photosystem I P700 chlorophyll a apoprotein A2.